The primary structure comprises 261 residues: Claudin-18 (261 aa).

Topologically, residues 1-6 are cytoplasmic; it reads MSTTRC. The chain crosses the membrane as a helical span at residues 7-27; sequence QVVGFLLSILGLAGCIVATEM. The Extracellular segment spans residues 28-80; it reads DMWSTQDLYDNPVTAVFQYEGLWRSCVQQSSGFTECRPYLTILGLPAMLQAVR. A helical transmembrane segment spans residues 81 to 101; it reads ALMIVGIVLSVIGLLVAIFAL. Residues 102-122 lie on the Cytoplasmic side of the membrane; that stretch reads KCIRMGNMDDSAKAKMTLTSG. The helical transmembrane segment at 123 to 143 threads the bilayer; that stretch reads IMFIIAGLCAIAGVSVFANML. At 144–174 the chain is on the extracellular side; that stretch reads VTNFWMSTASMFTSMGGMVQTVQTRYTFGAA. Residues 175 to 195 traverse the membrane as a helical segment; it reads LFVGWVAGGLTLIGGVLMCIA. The tract at residues 195–261 is required for role in regulation of RANKL-induced osteoclast differentiation; it reads ACRGLAPEET…QSPPSKYDYV (67 aa). Residues 196–261 lie on the Cytoplasmic side of the membrane; sequence CRGLAPEETN…QSPPSKYDYV (66 aa). Ser-214 carries the phosphoserine modification. The segment at 228–261 is disordered; that stretch reads SSGFESNTRNKKIYDGGARTEDEGQSPPSKYDYV. Positions 239–249 are enriched in basic and acidic residues; the sequence is KIYDGGARTED.

Belongs to the claudin family. Interacts with TJP2/ZO-2. Interacts with TJP1/ZO-1. Interacts with YAP1 (phosphorylated); the interaction sequesters YAP1 away from the nucleus and thereby restricts transcription of YAP1 target genes. Interacts with CLDN19.

The protein resides in the cell junction. It localises to the tight junction. The protein localises to the cell membrane. Its function is as follows. Involved in alveolar fluid homeostasis via regulation of alveolar epithelial tight junction composition and therefore ion transport and solute permeability, potentially via downstream regulation of the actin cytoskeleton organization and beta-2-adrenergic signaling. Required for lung alveolarization and maintenance of the paracellular alveolar epithelial barrier. Acts to maintain epithelial progenitor cell proliferation and organ size, via regulation of YAP1 localization away from the nucleus and thereby restriction of YAP1 target gene transcription. Acts as a negative regulator of RANKL-induced osteoclast differentiation, potentially via relocation of TJP2/ZO-2 away from the nucleus, subsequently involved in bone resorption in response to calcium deficiency. Mediates the osteoprotective effects of estrogen, potentially via acting downstream of estrogen signaling independently of RANKL signaling pathways. The protein is Claudin-18 (CLDN18) of Bos taurus (Bovine).